Here is a 53-residue protein sequence, read N- to C-terminus: Rubredoxin (53 aa).

The Rubredoxin-like domain maps to 1–53 (MQKFECTLCGYIYDPALVGPDTPDQDGAFEDVSENWVCPLCGAGKEDFEVYED). The Fe cation site is built by cysteine 6, cysteine 9, cysteine 38, and cysteine 41.

It belongs to the rubredoxin family. Fe(3+) is required as a cofactor.

Its function is as follows. Rubredoxin is a small nonheme, iron protein lacking acid-labile sulfide. Its single Fe, chelated to 4 Cys, functions as an electron acceptor and may also stabilize the conformation of the molecule. In Peptoniphilus asaccharolyticus (Peptostreptococcus asaccharolyticus), this protein is Rubredoxin.